The chain runs to 211 residues: Large ribosomal subunit protein bL25 (211 aa).

The interval 188 to 211 (HREEEKAPEETGEAAPAPTPETGQ) is disordered. Residues 200 to 211 (EAAPAPTPETGQ) are compositionally biased toward low complexity.

This sequence belongs to the bacterial ribosomal protein bL25 family. CTC subfamily. As to quaternary structure, part of the 50S ribosomal subunit; part of the 5S rRNA/L5/L18/L25 subcomplex. Contacts the 5S rRNA. Binds to the 5S rRNA independently of L5 and L18.

In terms of biological role, this is one of the proteins that binds to the 5S RNA in the ribosome where it forms part of the central protuberance. The protein is Large ribosomal subunit protein bL25 of Desulforudis audaxviator (strain MP104C).